The chain runs to 177 residues: tRNA (cytidine(56)-2'-O)-methyltransferase (177 aa).

S-adenosyl-L-methionine-binding positions include Leu84 and 109-113 (GAEKV).

The protein belongs to the aTrm56 family. As to quaternary structure, homodimer.

The protein localises to the cytoplasm. The catalysed reaction is cytidine(56) in tRNA + S-adenosyl-L-methionine = 2'-O-methylcytidine(56) in tRNA + S-adenosyl-L-homocysteine + H(+). Specifically catalyzes the AdoMet-dependent 2'-O-ribose methylation of cytidine at position 56 in tRNAs. The chain is tRNA (cytidine(56)-2'-O)-methyltransferase from Methanosarcina barkeri (strain Fusaro / DSM 804).